The primary structure comprises 426 residues: Glutamate-1-semialdehyde 2,1-aminomutase (426 aa).

An N6-(pyridoxal phosphate)lysine modification is found at Lys265.

The protein belongs to the class-III pyridoxal-phosphate-dependent aminotransferase family. HemL subfamily. As to quaternary structure, homodimer. It depends on pyridoxal 5'-phosphate as a cofactor.

The protein resides in the cytoplasm. The enzyme catalyses (S)-4-amino-5-oxopentanoate = 5-aminolevulinate. The protein operates within porphyrin-containing compound metabolism; protoporphyrin-IX biosynthesis; 5-aminolevulinate from L-glutamyl-tRNA(Glu): step 2/2. The protein is Glutamate-1-semialdehyde 2,1-aminomutase of Sodalis glossinidius (strain morsitans).